The chain runs to 64 residues: DNA gyrase inhibitor YacG (64 aa).

The Zn(2+) site is built by Cys-7, Cys-10, Cys-26, and Cys-30. Residues 44 to 64 (SIPGEPVVIANDDYNNEESDY) form a disordered region.

Belongs to the DNA gyrase inhibitor YacG family. In terms of assembly, interacts with GyrB. The cofactor is Zn(2+).

In terms of biological role, inhibits all the catalytic activities of DNA gyrase by preventing its interaction with DNA. Acts by binding directly to the C-terminal domain of GyrB, which probably disrupts DNA binding by the gyrase. The chain is DNA gyrase inhibitor YacG from Idiomarina loihiensis (strain ATCC BAA-735 / DSM 15497 / L2-TR).